The sequence spans 153 residues: Histone H2B.4 (153 aa).

Composition is skewed to basic and acidic residues over residues 1 to 28 (MAPK…EKAP) and 36 to 53 (EKRL…EGKK). Residues 1 to 61 (MAPKAEKKPA…KKAGRKKAKK (61 aa)) form a disordered region. N6-acetyllysine occurs at positions 7 and 37. Residue lysine 149 forms a Glycyl lysine isopeptide (Lys-Gly) (interchain with G-Cter in ubiquitin) linkage.

It belongs to the histone H2B family. As to quaternary structure, the nucleosome is a histone octamer containing two molecules each of H2A, H2B, H3 and H4 assembled in one H3-H4 heterotetramer and two H2A-H2B heterodimers. The octamer wraps approximately 147 bp of DNA. In terms of processing, can be acetylated to form H2BK6ac and H2BK33ac. Monoubiquitinated by BRE1 to form H2BK143ub1 and deubiquitinated by UBP26. Required for heterochromatic histone H3 di- and trimethylation at H3K4me. May give a specific tag for epigenetic transcriptional activation.

It localises to the nucleus. The protein localises to the chromosome. Core component of nucleosome. Nucleosomes wrap and compact DNA into chromatin, limiting DNA accessibility to the cellular machineries which require DNA as a template. Histones thereby play a central role in transcription regulation, DNA repair, DNA replication and chromosomal stability. DNA accessibility is regulated via a complex set of post-translational modifications of histones, also called histone code, and nucleosome remodeling. This is Histone H2B.4 (H2B.4) from Oryza sativa subsp. indica (Rice).